The primary structure comprises 312 residues: Probable cell division protein WhiA (312 aa).

A DNA-binding region (H-T-H motif) is located at residues 274 to 308 (SLKELGTLVPGGPISKSGVNHRLRKLNAYADELRQ).

It belongs to the WhiA family.

In terms of biological role, involved in cell division and chromosome segregation. The polypeptide is Probable cell division protein WhiA (Limosilactobacillus fermentum (strain NBRC 3956 / LMG 18251) (Lactobacillus fermentum)).